Here is a 360-residue protein sequence, read N- to C-terminus: Snurportin-1 (360 aa).

M1 carries the post-translational modification N-acetylmethionine. A disordered region spans residues 1–42; sequence MEELSQALASSFSVSQDLNSTAAPHPRLSQYKSKYSSLEQSE. The interval 1 to 65 is necessary for interaction with KPNB1 and m3G-cap U1 and U5 snRNP import receptor activity; sequence MEELSQALAS…LDYVNHARRL (65 aa). The tract at residues 1–159 is necessary for interaction with XPO1; it reads MEELSQALAS…NRFSSLLPGG (159 aa). Over residues 7-22 the composition is skewed to polar residues; the sequence is ALASSFSVSQDLNSTA. Residues 11–73 enclose the IBB domain; it reads SFSVSQDLNS…RLAEDDWTGM (63 aa). A Phosphoserine modification is found at S75. The tract at residues 127–129 is interaction with m3G-cap structure; sequence GKR. The necessary for binding to the m3G-cap structure stretch occupies residues 208–328; it reads MHSKLPEEEG…GMKEKLTHKA (121 aa). The tract at residues 339–360 is disordered; that stretch reads LSTPKLKGSSHSPDHPGCLMEN. S350 carries the phosphoserine modification.

It belongs to the snurportin family. As to quaternary structure, component of an import snRNP complex composed of KPNB1, SNUPN, SMN1 and ZNF259. Component of a nuclear export receptor complex composed of KPNB1, Ran, SNUPN and XPO1. Found in a trimeric export complex with SNUPN, Ran and XPO1. Interacts (via IBB domain) with KPNB1; the interaction is direct. Interacts with DDX20, IPO7, SMN1, SNRPB and XPO1. Interacts directly with XPO1. Its interaction with XPO1 and binding to m3G-cap U snRNPs appears to be mutually exclusive. Can form homomers.

The protein localises to the nucleus. The protein resides in the cytoplasm. Functionally, functions as an U snRNP-specific nuclear import adapter. Involved in the trimethylguanosine (m3G)-cap-dependent nuclear import of U snRNPs. Binds specifically to the terminal m3G-cap U snRNAs. This chain is Snurportin-1 (SNUPN), found in Homo sapiens (Human).